A 318-amino-acid chain; its full sequence is Taste receptor type 2 member 60 (318 aa).

At 1 to 7 (MNGDHMV) the chain is on the extracellular side. A helical transmembrane segment spans residues 8 to 28 (LGSSVTDQKAIILVIILLLLC). Residues 29-40 (LVAIAGNGFITA) are Cytoplasmic-facing. The helical transmembrane segment at 41-61 (ALGVEWVLRGTLLPCDKLLVS) threads the bilayer. Residues 62–88 (LRASRFCLQWVVMGKTIYVLLYPTAFP) lie on the Extracellular side of the membrane. The helical transmembrane segment at 89-109 (YNPVLQFLAFQWDFLNAATLW) threads the bilayer. At 110–128 (FSSWLSVFYCVKIATFTHP) the chain is on the cytoplasmic side. Residues 129-149 (VFLWLKHKLSEWVPWMFFSSV) form a helical membrane-spanning segment. The Extracellular portion of the chain corresponds to 150 to 183 (GLSSFTTILFFIGNHSIYQNYLRNHLQPWNVTGN). N-linked (GlcNAc...) asparagine glycosylation is found at asparagine 163 and asparagine 179. A helical transmembrane segment spans residues 184–204 (SIWSYCEKFYLFPVKMITWTM). At 205–234 (PTAVFFICMILLITSLGRHMEKALLTTSGF) the chain is on the cytoplasmic side. The helical transmembrane segment at 235-255 (REPSVQAHVKALLALLSLAML) threads the bilayer. The Extracellular segment spans residues 256–264 (FISYFLSLV). Residues 265-285 (LSAAGIFPPLDFKFWVGESVI) traverse the membrane as a helical segment. Topologically, residues 286–318 (YLCAGVHPIILLFSNRRLRAVLERCRSSRCRTP) are cytoplasmic.

This sequence belongs to the G-protein coupled receptor T2R family.

The protein localises to the membrane. In terms of biological role, receptor that may play a role in the perception of bitterness and is gustducin-linked. May play a role in sensing the chemical composition of the gastrointestinal content. The activity of this receptor may stimulate alpha gustducin, mediate PLC-beta-2 activation and lead to the gating of TRPM5. The chain is Taste receptor type 2 member 60 (TAS2R60) from Macaca mulatta (Rhesus macaque).